A 403-amino-acid chain; its full sequence is Sex hormone-binding globulin (403 aa).

The signal sequence occupies residues 1–30 (MEKGEVASLRCRLLLLLLLLTLPPTHQGRT). 2 consecutive Laminin G-like domains span residues 46–218 (KYLS…LGNC) and 225–391 (GLFF…THSC). A disulfide bond links Cys194 and Cys218. Asn274 is a glycosylation site (N-linked (GlcNAc...) asparagine). An intrachain disulfide couples Cys363 to Cys391. N-linked (GlcNAc...) asparagine glycosylation is present at Asn397.

In terms of assembly, homodimer. In terms of tissue distribution, isoform 2 is only expressed in the liver.

It is found in the secreted. In terms of biological role, functions as an androgen transport protein, but may also be involved in receptor mediated processes. Each dimer binds one molecule of steroid. Specific for 5-alpha-dihydrotestosterone, testosterone, and 17-beta-estradiol. Regulates the plasma metabolic clearance rate of steroid hormones by controlling their plasma concentration. This is Sex hormone-binding globulin (Shbg) from Rattus norvegicus (Rat).